Consider the following 215-residue polypeptide: Probable nicotinate-nucleotide adenylyltransferase (215 aa).

The protein belongs to the NadD family.

It carries out the reaction nicotinate beta-D-ribonucleotide + ATP + H(+) = deamido-NAD(+) + diphosphate. The protein operates within cofactor biosynthesis; NAD(+) biosynthesis; deamido-NAD(+) from nicotinate D-ribonucleotide: step 1/1. Its function is as follows. Catalyzes the reversible adenylation of nicotinate mononucleotide (NaMN) to nicotinic acid adenine dinucleotide (NaAD). In Shewanella sp. (strain W3-18-1), this protein is Probable nicotinate-nucleotide adenylyltransferase.